The chain runs to 750 residues: Cullin-5 (750 aa).

Residues 678-739 (RFFKLQAAIV…QEYIRRTTDD (62 aa)) enclose the Cullin neddylation domain. Residue K691 forms a Glycyl lysine isopeptide (Lys-Gly) (interchain with G-Cter in NEDD8) linkage.

This sequence belongs to the cullin family. In terms of processing, neddylated; which enhances the ubiquitination activity of SCF-like complex.

The protein operates within protein modification; protein ubiquitination. Probable core component of cullin-based SCF-like E3 ubiquitin-protein ligase complexes which mediate the ubiquitination and subsequent proteasomal degradation of target proteins. The E3 ubiquitin-protein ligase activity of the complex is dependent on the neddylation of the cullin subunit. The sequence is that of Cullin-5 (culE) from Dictyostelium discoideum (Social amoeba).